The primary structure comprises 234 residues: Peptidase E (234 aa).

Active-site charge relay system residues include Ser120, Asp135, and His157.

This sequence belongs to the peptidase S51 family.

It is found in the cytoplasm. The enzyme catalyses Dipeptidase E catalyzes the hydrolysis of dipeptides Asp-|-Xaa. It does not act on peptides with N-terminal Glu, Asn or Gln, nor does it cleave isoaspartyl peptides.. In terms of biological role, hydrolyzes dipeptides containing N-terminal aspartate residues. May play a role in allowing the cell to use peptide aspartate to spare carbon otherwise required for the synthesis of the aspartate family of amino acids. The sequence is that of Peptidase E from Salmonella gallinarum (strain 287/91 / NCTC 13346).